A 311-amino-acid chain; its full sequence is HPr kinase/phosphorylase (311 aa).

Residues His-139 and Lys-160 contribute to the active site. Residue Gly-154–Ser-161 coordinates ATP. Ser-161 is a Mg(2+) binding site. Asp-178 serves as the catalytic Proton acceptor; for phosphorylation activity. Proton donor; for dephosphorylation activity. Residues Leu-202–Asp-211 form an important for the catalytic mechanism of both phosphorylation and dephosphorylation region. Glu-203 contributes to the Mg(2+) binding site. Arg-244 is a catalytic residue. The important for the catalytic mechanism of dephosphorylation stretch occupies residues Pro-265–Arg-270.

Belongs to the HPrK/P family. As to quaternary structure, homohexamer. Requires Mg(2+) as cofactor.

The enzyme catalyses [HPr protein]-L-serine + ATP = [HPr protein]-O-phospho-L-serine + ADP + H(+). The catalysed reaction is [HPr protein]-O-phospho-L-serine + phosphate + H(+) = [HPr protein]-L-serine + diphosphate. Its function is as follows. Catalyzes the ATP- as well as the pyrophosphate-dependent phosphorylation of a specific serine residue in HPr, a phosphocarrier protein of the phosphoenolpyruvate-dependent sugar phosphotransferase system (PTS). HprK/P also catalyzes the pyrophosphate-producing, inorganic phosphate-dependent dephosphorylation (phosphorolysis) of seryl-phosphorylated HPr (P-Ser-HPr). The two antagonistic activities of HprK/P are regulated by several intracellular metabolites, which change their concentration in response to the absence or presence of rapidly metabolisable carbon sources (glucose, fructose, etc.) in the growth medium. Therefore, by controlling the phosphorylation state of HPr, HPrK/P is a sensor enzyme that plays a major role in the regulation of carbon metabolism and sugar transport: it mediates carbon catabolite repression (CCR), and regulates PTS-catalyzed carbohydrate uptake and inducer exclusion. This is HPr kinase/phosphorylase from Exiguobacterium sp. (strain ATCC BAA-1283 / AT1b).